The chain runs to 206 residues: Small ribosomal subunit protein uS4 (206 aa).

Residues 96–156 (GRLDNVVYRM…EKSKKQARIK (61 aa)) enclose the S4 RNA-binding domain.

It belongs to the universal ribosomal protein uS4 family. Part of the 30S ribosomal subunit. Contacts protein S5. The interaction surface between S4 and S5 is involved in control of translational fidelity.

Its function is as follows. One of the primary rRNA binding proteins, it binds directly to 16S rRNA where it nucleates assembly of the body of the 30S subunit. Functionally, with S5 and S12 plays an important role in translational accuracy. This is Small ribosomal subunit protein uS4 from Mannheimia succiniciproducens (strain KCTC 0769BP / MBEL55E).